The primary structure comprises 306 residues: D-alanine--D-alanine ligase (306 aa).

The region spanning 100–295 is the ATP-grasp domain; it reads KQIFRRAGLP…FGQLLERLME (196 aa). 127-180 serves as a coordination point for ATP; that stretch reads RLPYPLFVKSNTGGSSLRLGRARNRAELDDIMGQIFAAGEEVIMEPVLPGREVT. Residues Asp249, Glu262, and Asn264 each contribute to the Mg(2+) site.

The protein belongs to the D-alanine--D-alanine ligase family. The cofactor is Mg(2+). It depends on Mn(2+) as a cofactor.

It is found in the cytoplasm. The catalysed reaction is 2 D-alanine + ATP = D-alanyl-D-alanine + ADP + phosphate + H(+). It participates in cell wall biogenesis; peptidoglycan biosynthesis. Its function is as follows. Cell wall formation. The chain is D-alanine--D-alanine ligase from Desulfovibrio desulfuricans (strain ATCC 27774 / DSM 6949 / MB).